Here is a 265-residue protein sequence, read N- to C-terminus: Expansin-like A1 (265 aa).

The signal sequence occupies residues 1 to 20 (MGSFLFLIVVIFLFSSSVNA). The Expansin-like EG45 domain maps to 41 to 147 (SGACAYGSMA…QRVPCDYGNK (107 aa)). Residues 42–62 (GACAYGSMATSFFAGHIAAAI) form a helical membrane-spanning segment. Asn99 and Asn102 each carry an N-linked (GlcNAc...) asparagine glycan. Residues 161 to 244 (NYLEIKLLYQ…NWEAGKIYDA (84 aa)) enclose the Expansin-like CBD domain.

It belongs to the expansin family. Expansin-like A subfamily.

Its subcellular location is the membrane. The chain is Expansin-like A1 (EXLA1) from Arabidopsis thaliana (Mouse-ear cress).